A 316-amino-acid chain; its full sequence is Glutathione synthetase (316 aa).

The ATP-grasp domain occupies 125–310; that stretch reads KLFTAWFSDL…ITGMLMDAIE (186 aa). Residue Arg-256 is glycosylated (N-beta-linked (GlcNAc) arginine). Mg(2+)-binding residues include Glu-281 and Asn-283.

The protein belongs to the prokaryotic GSH synthase family. Mg(2+) is required as a cofactor. Requires Mn(2+) as cofactor.

It carries out the reaction gamma-L-glutamyl-L-cysteine + glycine + ATP = glutathione + ADP + phosphate + H(+). It participates in sulfur metabolism; glutathione biosynthesis; glutathione from L-cysteine and L-glutamate: step 2/2. In Escherichia coli O127:H6 (strain E2348/69 / EPEC), this protein is Glutathione synthetase.